The primary structure comprises 725 residues: Phosphoribosylformylglycinamidine synthase subunit PurL (725 aa).

His42 is an active-site residue. Residues Tyr45 and Lys84 each coordinate ATP. Residue Glu86 participates in Mg(2+) binding. Substrate is bound by residues 87 to 90 and Arg109; that span reads SHNH. The Proton acceptor role is filled by His88. Residue Asp110 participates in Mg(2+) binding. Position 237 (Gln237) interacts with substrate. Asp265 provides a ligand contact to Mg(2+). 309–311 contacts substrate; it reads ESQ. Residues Asp491 and Gly528 each contribute to the ATP site. Asn529 contributes to the Mg(2+) binding site. A substrate-binding site is contributed by Ser531.

The protein belongs to the FGAMS family. As to quaternary structure, monomer. Part of the FGAM synthase complex composed of 1 PurL, 1 PurQ and 2 PurS subunits.

The protein resides in the cytoplasm. It catalyses the reaction N(2)-formyl-N(1)-(5-phospho-beta-D-ribosyl)glycinamide + L-glutamine + ATP + H2O = 2-formamido-N(1)-(5-O-phospho-beta-D-ribosyl)acetamidine + L-glutamate + ADP + phosphate + H(+). Its pathway is purine metabolism; IMP biosynthesis via de novo pathway; 5-amino-1-(5-phospho-D-ribosyl)imidazole from N(2)-formyl-N(1)-(5-phospho-D-ribosyl)glycinamide: step 1/2. Part of the phosphoribosylformylglycinamidine synthase complex involved in the purines biosynthetic pathway. Catalyzes the ATP-dependent conversion of formylglycinamide ribonucleotide (FGAR) and glutamine to yield formylglycinamidine ribonucleotide (FGAM) and glutamate. The FGAM synthase complex is composed of three subunits. PurQ produces an ammonia molecule by converting glutamine to glutamate. PurL transfers the ammonia molecule to FGAR to form FGAM in an ATP-dependent manner. PurS interacts with PurQ and PurL and is thought to assist in the transfer of the ammonia molecule from PurQ to PurL. This is Phosphoribosylformylglycinamidine synthase subunit PurL from Campylobacter lari (strain RM2100 / D67 / ATCC BAA-1060).